Consider the following 99-residue polypeptide: High mobility group nucleosome-binding domain-containing protein 3 (99 aa).

3 stretches are compositionally biased toward basic and acidic residues: residues 1 to 25 (MPKR…EPTR), 39 to 53 (PEPK…KEPG), and 62 to 72 (GKKEEKQEAGK). Residues 1-99 (MPKRKSPENT…KTESVDNEGE (99 aa)) form a disordered region. A Phosphoserine modification is found at Ser6. Thr10 is subject to Phosphothreonine. 2 positions are modified to phosphoserine: Ser78 and Ser93. Over residues 81 to 93 (GETKAEEAQKTES) the composition is skewed to basic and acidic residues.

The protein belongs to the HMGN family. In terms of assembly, interacts with the ligand binding domain of the thyroid receptor (TR) (in vitro). Requires the presence of thyroid hormone for its interaction. Interacts with transcriptional regulator SEHBP. Interacts with nucleosomes.

The protein localises to the nucleus. Binds to nucleosomes, regulating chromatin structure and consequently, chromatin-dependent processes such as transcription, DNA replication and DNA repair. Affects both insulin and glucagon levels and modulates the expression of pancreatic genes involved in insulin secretion. Regulates the expression of the glucose transporter SLC2A2 by binding specifically to its promoter region and recruiting PDX1 and additional transcription factors. Regulates the expression of SLC6A9, a glycine transporter which regulates the glycine concentration in synaptic junctions in the central nervous system, by binding to its transcription start site. May play a role in ocular development and astrocyte function. The polypeptide is High mobility group nucleosome-binding domain-containing protein 3 (HMGN3) (Pongo abelii (Sumatran orangutan)).